A 350-amino-acid polypeptide reads, in one-letter code: Solute carrier family 35 member E4 (350 aa).

A compositionally biased stretch (low complexity) spans 19 to 30; sequence GAAAGGAQAAGP. The tract at residues 19–42 is disordered; the sequence is GAAAGGAQAAGPPEWPPGSPQALR. 8 helical membrane-spanning segments follow: residues 51–71, 73–93, 110–132, 135–155, 218–238, 258–278, 279–299, and 312–332; these read MAAL…KWIF, VHGF…AALA, VLLL…RAVP, LAQL…ALLL, VTLL…AALV, ILLS…LLAL, TSAL…LILS, and YVGI…EFVA. An EamA domain is found at 125–179; it reads NVGLRAVPLDLAQLVTTTTPLFTLALSALLLGRRHHPLQLAAMGPLCLGAACSLA.

The protein belongs to the TPT transporter family. SLC35E subfamily.

It is found in the membrane. Functionally, putative transporter. The polypeptide is Solute carrier family 35 member E4 (SLC35E4) (Homo sapiens (Human)).